We begin with the raw amino-acid sequence, 465 residues long: Sushi repeat-containing protein SRPX2 (465 aa).

Residues 1–23 (MASQLTQRGALFLLFFLTPAVTP) form the signal peptide. Sushi domains lie at 69–119 (ATCY…YCRQ), 120–178 (MRCH…VCVD), and 262–321 (RRCP…ICAP). 4 cysteine pairs are disulfide-bonded: Cys71/Cys105, Cys91/Cys117, Cys122/Cys163, and Cys149/Cys176. Residues 177–261 (VDIDPPKIRC…SCKFIVKVQV (85 aa)) enclose the HYR domain. 2 cysteine pairs are disulfide-bonded: Cys264–Cys306 and Cys292–Cys319.

Forms homooligomers. Interacts with PLAUR (via the UPAR/Ly6 domains), ADAMTS4 and CTSB. Interacts with HGF; the interaction increases the mitogenic activity of HGF. Contains chondroitin sulfate chains. In terms of tissue distribution, expressed in neurons of the rolandic area of the brain (at protein level). Highly expressed in the brain, placenta, lung, trachea, uterus, adrenal gland, heart, ovary and placenta. Weakly expressed in the peripheral blood, brain and bone marrow. Expressed in numerous cancer cell lines and in gastrointestinal cancer cells. Higher levels found in colorectal cancers than in normal colonic mucosa.

The protein localises to the secreted. The protein resides in the cytoplasm. It localises to the cell surface. Its subcellular location is the synapse. Acts as a ligand for the urokinase plasminogen activator surface receptor. Plays a role in angiogenesis by inducing endothelial cell migration and the formation of vascular network (cords). Involved in cellular migration and adhesion. Increases the phosphorylation levels of FAK. Interacts with and increases the mitogenic activity of HGF. Promotes synapse formation. May have a role in the perisylvian region, critical for language and cognitive development. The protein is Sushi repeat-containing protein SRPX2 (SRPX2) of Homo sapiens (Human).